A 463-amino-acid chain; its full sequence is FAD-dependent monooxygenase nodM (463 aa).

A helical membrane pass occupies residues 5 to 25 (EFKVIIVGGSLAGLTLAHCLL). The FAD site is built by Glu35, Gly49, Arg108, Asp305, and Ala318. The helical transmembrane segment at 438–458 (ILLGFTGVFTSALAMVVLLHI) threads the bilayer.

Belongs to the paxM FAD-dependent monooxygenase family. It depends on FAD as a cofactor.

Its subcellular location is the membrane. It functions in the pathway secondary metabolite biosynthesis. Functionally, FAD-dependent monooxygenase; part of the gene cluster that mediates the biosynthesis of the indole diterpenes nodulisporic acids (NA). Nodulisporic acid A (NAA) and its chemically modified derivatives are of particular significance because of their highly potent insecticidal activity against blood-feeding arthropods and lack of observable adverse effects on mammals, in particular the tremogenicity associated with the paspaline-derived IDTs is not observed. The geranylgeranyl diphosphate (GGPP) synthase ggs1, localized outside of the cluster, is proposed to catalyze the first step in nodulisporic acid biosynthesis via conversion of farnesyl pyrophosphate and isopentyl pyrophosphate into geranylgeranyl pyrophosphate (GGPP). Condensation of indole-3-glycerol phosphate with GGPP by the prenyl transferase nodC then forms 3-geranylgeranylindole (3-GGI). Epoxidation by the FAD-dependent monooxygenase nodM leads to a single-epoxidized-GGI that is substrate of the terpene cyclase nodB for cyclization to yield emindole SB. The terminal methyl carbon, C28, of emindole SB is then oxidized by the cytochrome P450 monooxygenase nodW to produce nodulisporic acid F (NAF), the pentacyclic core of NAA. NAF is converted to nodulisporic acid E (NAE) via prenylation. This step is probably performed by one of the indole diterpene prenyltransferases nodD1 or nodD2. Several oxidation steps performed by the FAD-linked oxidoreductase nodO and one of the cytochrome P450 monooxygenase nodR, nodX or nodZ further convert NAE to nodulisporic acid D (NAD). NAD is substrate of cytochrome P450 monooxygenase nodJ to produce the precursor of nodulisporic acid C (NAC), converted to NAC by one of the indole diterpene prenyltransferases nodD1 or nodD2. The FAD-dependent monooxygenase nodY2 then oxidizes NAC to nodulisporic acid B (NAB). Finally NAB is converted to NAA by one of the cytochrome P450 monooxygenases nodR, nodX or nodZ. The protein is FAD-dependent monooxygenase nodM of Hypoxylon pulicicidum.